A 441-amino-acid chain; its full sequence is Serine carboxypeptidase-like 1 (441 aa).

The first 29 residues, 1 to 29 (MANKYVSSVLKSLLVLLHLVFLSKQHVDS), serve as a signal peptide directing secretion. 3 cysteine pairs are disulfide-bonded: Cys-88-Cys-331, Cys-252-Cys-266, and Cys-290-Cys-297. Residue Asn-109 is glycosylated (N-linked (GlcNAc...) asparagine). Residue Ser-184 is part of the active site. A glycan (N-linked (GlcNAc...) asparagine) is linked at Asn-350. The active site involves Asp-366. N-linked (GlcNAc...) asparagine glycosylation occurs at Asn-382. The active site involves His-419.

It belongs to the peptidase S10 family. In terms of tissue distribution, expressed in seedlings and roots.

It is found in the secreted. Functionally, probable carboxypeptidase. In Arabidopsis thaliana (Mouse-ear cress), this protein is Serine carboxypeptidase-like 1 (SCPL1).